The following is a 156-amino-acid chain: Small ribosomal subunit protein uS7 (156 aa).

Belongs to the universal ribosomal protein uS7 family. Part of the 30S ribosomal subunit. Contacts proteins S9 and S11.

Its function is as follows. One of the primary rRNA binding proteins, it binds directly to 16S rRNA where it nucleates assembly of the head domain of the 30S subunit. Is located at the subunit interface close to the decoding center, probably blocks exit of the E-site tRNA. The protein is Small ribosomal subunit protein uS7 of Corynebacterium jeikeium (strain K411).